We begin with the raw amino-acid sequence, 739 residues long: Eukaryotic translation initiation factor 3 subunit B (739 aa).

The region spanning 39–125 (AFVVIDGLPV…HTLAVNKLTD (87 aa)) is the RRM domain. WD repeat units lie at residues 191–229 (RDHW…KQKQ), 231–288 (PHPF…RSFV), 457–498 (SLKD…SFFA), 516–559 (IEKK…EKPE), and 574–612 (NEHF…HTFS).

Belongs to the eIF-3 subunit B family. Component of the eukaryotic translation initiation factor 3 (eIF-3) complex.

It is found in the cytoplasm. Functionally, RNA-binding component of the eukaryotic translation initiation factor 3 (eIF-3) complex, which is involved in protein synthesis of a specialized repertoire of mRNAs and, together with other initiation factors, stimulates binding of mRNA and methionyl-tRNAi to the 40S ribosome. The eIF-3 complex specifically targets and initiates translation of a subset of mRNAs involved in cell proliferation. The protein is Eukaryotic translation initiation factor 3 subunit B of Coccidioides immitis (strain RS) (Valley fever fungus).